A 207-amino-acid chain; its full sequence is Thymidine kinase (207 aa).

Residues Gly15–Ser22 and Asp88–Gln91 each bind ATP. The Proton acceptor role is filled by Glu89. Zn(2+) is bound by residues Cys145, Cys148, Cys183, and His186. Positions Arg184–Asn198 are enriched in basic residues. The disordered stretch occupies residues Arg184–Glu207.

The protein belongs to the thymidine kinase family. Homotetramer.

The protein localises to the cytoplasm. The catalysed reaction is thymidine + ATP = dTMP + ADP + H(+). This is Thymidine kinase from Geobacillus kaustophilus (strain HTA426).